We begin with the raw amino-acid sequence, 427 residues long: UPF0597 protein FN1147 (427 aa).

It belongs to the UPF0597 family.

This is UPF0597 protein FN1147 from Fusobacterium nucleatum subsp. nucleatum (strain ATCC 25586 / DSM 15643 / BCRC 10681 / CIP 101130 / JCM 8532 / KCTC 2640 / LMG 13131 / VPI 4355).